The sequence spans 434 residues: Chaperone SurA (434 aa).

The signal sequence occupies residues Met1–Ala22. PpiC domains are found at residues Thr173–Asp274 and Val283–Asp383.

The protein resides in the periplasm. It catalyses the reaction [protein]-peptidylproline (omega=180) = [protein]-peptidylproline (omega=0). Chaperone involved in the correct folding and assembly of outer membrane proteins. Recognizes specific patterns of aromatic residues and the orientation of their side chains, which are found more frequently in integral outer membrane proteins. May act in both early periplasmic and late outer membrane-associated steps of protein maturation. The polypeptide is Chaperone SurA (Photobacterium profundum (strain SS9)).